The sequence spans 367 residues: DNA replication and repair protein RecF (367 aa).

An ATP-binding site is contributed by 30–37 (GANGSGKT).

This sequence belongs to the RecF family.

It localises to the cytoplasm. The RecF protein is involved in DNA metabolism; it is required for DNA replication and normal SOS inducibility. RecF binds preferentially to single-stranded, linear DNA. It also seems to bind ATP. This chain is DNA replication and repair protein RecF, found in Pseudomonas fluorescens (strain Pf0-1).